Consider the following 505-residue polypeptide: Methylmalonyl-CoA carboxyltransferase 5S subunit (505 aa).

The Pyruvate carboxyltransferase domain maps to 14–276 (VGITELVLRD…TTNLDYDRLH (263 aa)). Substrate is bound by residues 22–26 (RDAHQ), A59, and K184. Residue D23 coordinates Co(2+). Co(2+) is bound by residues K184, H215, and H217. K184 is subject to N6-carboxylysine; partial.

Homodimer. Transcarboxylase is composed of three subunits: 1.3S, 5S, and 12S. The core of the enzyme is composed of six 12S subunits. On each side of the core there are three pairs of 5S subunits. Each 5S dimer is attached to the core by two 1.3S subunits. Thus the total number of chains is 30 (6 + 12 + 12). It depends on Co(2+) as a cofactor. Post-translationally, lys-184 is carboxylated in the free enzyme and helps to coordinate the cobalt ion. Lys-184 is partially carboxylated in the complex with pyruvate, but is not carboxylated in the oxaloacetate-bound form.

It catalyses the reaction (S)-methylmalonyl-CoA + pyruvate = propanoyl-CoA + oxaloacetate. Functionally, the 5S subunit specifically catalyzes the transfer of the carboxyl group from biotin of the 1.3S subunit to pyruvate to form oxaloacetate and 1.3S biotin. The sequence is that of Methylmalonyl-CoA carboxyltransferase 5S subunit from Propionibacterium freudenreichii subsp. shermanii.